Here is a 103-residue protein sequence, read N- to C-terminus: Pyrimidine/purine nucleoside phosphorylase (103 aa).

The protein belongs to the nucleoside phosphorylase PpnP family.

The enzyme catalyses a purine D-ribonucleoside + phosphate = a purine nucleobase + alpha-D-ribose 1-phosphate. It carries out the reaction adenosine + phosphate = alpha-D-ribose 1-phosphate + adenine. The catalysed reaction is cytidine + phosphate = cytosine + alpha-D-ribose 1-phosphate. It catalyses the reaction guanosine + phosphate = alpha-D-ribose 1-phosphate + guanine. The enzyme catalyses inosine + phosphate = alpha-D-ribose 1-phosphate + hypoxanthine. It carries out the reaction thymidine + phosphate = 2-deoxy-alpha-D-ribose 1-phosphate + thymine. The catalysed reaction is uridine + phosphate = alpha-D-ribose 1-phosphate + uracil. It catalyses the reaction xanthosine + phosphate = alpha-D-ribose 1-phosphate + xanthine. Its function is as follows. Catalyzes the phosphorolysis of diverse nucleosides, yielding D-ribose 1-phosphate and the respective free bases. Can use uridine, adenosine, guanosine, cytidine, thymidine, inosine and xanthosine as substrates. Also catalyzes the reverse reactions. This is Pyrimidine/purine nucleoside phosphorylase from Methylococcus capsulatus (strain ATCC 33009 / NCIMB 11132 / Bath).